We begin with the raw amino-acid sequence, 283 residues long: Bifunctional protein FolD (283 aa).

Residues glycine 166–serine 168, serine 191, and threonine 232 each bind NADP(+).

Belongs to the tetrahydrofolate dehydrogenase/cyclohydrolase family. As to quaternary structure, homodimer.

The enzyme catalyses (6R)-5,10-methylene-5,6,7,8-tetrahydrofolate + NADP(+) = (6R)-5,10-methenyltetrahydrofolate + NADPH. The catalysed reaction is (6R)-5,10-methenyltetrahydrofolate + H2O = (6R)-10-formyltetrahydrofolate + H(+). It participates in one-carbon metabolism; tetrahydrofolate interconversion. Catalyzes the oxidation of 5,10-methylenetetrahydrofolate to 5,10-methenyltetrahydrofolate and then the hydrolysis of 5,10-methenyltetrahydrofolate to 10-formyltetrahydrofolate. The sequence is that of Bifunctional protein FolD from Halothermothrix orenii (strain H 168 / OCM 544 / DSM 9562).